The sequence spans 186 residues: Small ribosomal subunit protein uS7 (186 aa).

The protein belongs to the universal ribosomal protein uS7 family. In terms of assembly, part of the 30S ribosomal subunit.

Its function is as follows. One of the primary rRNA binding proteins, it binds directly to 16S rRNA where it nucleates assembly of the head domain of the 30S subunit. Is located at the subunit interface close to the decoding center. The sequence is that of Small ribosomal subunit protein uS7 from Methanococcoides burtonii (strain DSM 6242 / NBRC 107633 / OCM 468 / ACE-M).